A 179-amino-acid polypeptide reads, in one-letter code: uncharacterized protein (179 aa).

The first 26 residues, Met-1–Cys-26, serve as a signal peptide directing secretion.

This is an uncharacterized protein from Acheta domesticus (House cricket).